The primary structure comprises 380 residues: tRNA-specific 2-thiouridylase MnmA (380 aa).

ATP is bound by residues 11–18 and Met37; that span reads GMSGGVDS. The segment at 92-94 is interaction with target base in tRNA; the sequence is NPD. Cys97 serves as the catalytic Nucleophile. Cys97 and Cys197 are joined by a disulfide. Gly121 lines the ATP pocket. The tract at residues 147–149 is interaction with tRNA; that stretch reads KDQ. Cys197 acts as the Cysteine persulfide intermediate in catalysis. The interval 331-332 is interaction with tRNA; sequence RY.

It belongs to the MnmA/TRMU family.

It is found in the cytoplasm. It catalyses the reaction S-sulfanyl-L-cysteinyl-[protein] + uridine(34) in tRNA + AH2 + ATP = 2-thiouridine(34) in tRNA + L-cysteinyl-[protein] + A + AMP + diphosphate + H(+). Its function is as follows. Catalyzes the 2-thiolation of uridine at the wobble position (U34) of tRNA, leading to the formation of s(2)U34. The chain is tRNA-specific 2-thiouridylase MnmA from Karelsulcia muelleri (strain GWSS) (Sulcia muelleri).